The following is a 230-amino-acid chain: uncharacterized protein (230 aa).

6 helical membrane passes run 4–24, 30–50, 67–87, 91–111, 148–168, and 210–230; these read ACIA…MVKL, LPFL…LMMF, LLGP…HIIV, VPIL…GLIF, MTVV…PLFL, and MTLC…LFHI.

Belongs to the YohK (E.coli)/YwbG (IPA-22R) (B.subtilis) family.

The protein resides in the cell membrane. This is an uncharacterized protein from Bacillus subtilis (strain 168).